The following is a 404-amino-acid chain: Probable tRNA sulfurtransferase (404 aa).

Residues Gln60–Glu165 enclose the THUMP domain. ATP is bound by residues Met183–Leu184, His208–Phe209, Arg265, Gly287, and Gln296.

Belongs to the ThiI family.

It localises to the cytoplasm. The catalysed reaction is [ThiI sulfur-carrier protein]-S-sulfanyl-L-cysteine + a uridine in tRNA + 2 reduced [2Fe-2S]-[ferredoxin] + ATP + H(+) = [ThiI sulfur-carrier protein]-L-cysteine + a 4-thiouridine in tRNA + 2 oxidized [2Fe-2S]-[ferredoxin] + AMP + diphosphate. The enzyme catalyses [ThiS sulfur-carrier protein]-C-terminal Gly-Gly-AMP + S-sulfanyl-L-cysteinyl-[cysteine desulfurase] + AH2 = [ThiS sulfur-carrier protein]-C-terminal-Gly-aminoethanethioate + L-cysteinyl-[cysteine desulfurase] + A + AMP + 2 H(+). It functions in the pathway cofactor biosynthesis; thiamine diphosphate biosynthesis. Functionally, catalyzes the ATP-dependent transfer of a sulfur to tRNA to produce 4-thiouridine in position 8 of tRNAs, which functions as a near-UV photosensor. Also catalyzes the transfer of sulfur to the sulfur carrier protein ThiS, forming ThiS-thiocarboxylate. This is a step in the synthesis of thiazole, in the thiamine biosynthesis pathway. The sulfur is donated as persulfide by IscS. This chain is Probable tRNA sulfurtransferase, found in Streptococcus pyogenes serotype M4 (strain MGAS10750).